The primary structure comprises 202 residues: 3-isopropylmalate dehydratase small subunit 2 (202 aa).

Belongs to the LeuD family. LeuD type 1 subfamily. Heterodimer of LeuC and LeuD.

The enzyme catalyses (2R,3S)-3-isopropylmalate = (2S)-2-isopropylmalate. Its pathway is amino-acid biosynthesis; L-leucine biosynthesis; L-leucine from 3-methyl-2-oxobutanoate: step 2/4. In terms of biological role, catalyzes the isomerization between 2-isopropylmalate and 3-isopropylmalate, via the formation of 2-isopropylmaleate. The protein is 3-isopropylmalate dehydratase small subunit 2 of Bordetella parapertussis (strain 12822 / ATCC BAA-587 / NCTC 13253).